We begin with the raw amino-acid sequence, 379 residues long: Dual-specificity RNA methyltransferase RlmN (379 aa).

Catalysis depends on Glu95, which acts as the Proton acceptor. The Radical SAM core domain occupies 101–345 (EETRGTLCVS…TTVRKTRGDD (245 aa)). Cys108 and Cys350 are disulfide-bonded. [4Fe-4S] cluster-binding residues include Cys115, Cys119, and Cys122. S-adenosyl-L-methionine contacts are provided by residues 176–177 (GE), Ser208, 230–232 (SLH), and Asn307. Cys350 functions as the S-methylcysteine intermediate in the catalytic mechanism.

This sequence belongs to the radical SAM superfamily. RlmN family. Requires [4Fe-4S] cluster as cofactor.

Its subcellular location is the cytoplasm. The catalysed reaction is adenosine(2503) in 23S rRNA + 2 reduced [2Fe-2S]-[ferredoxin] + 2 S-adenosyl-L-methionine = 2-methyladenosine(2503) in 23S rRNA + 5'-deoxyadenosine + L-methionine + 2 oxidized [2Fe-2S]-[ferredoxin] + S-adenosyl-L-homocysteine. It carries out the reaction adenosine(37) in tRNA + 2 reduced [2Fe-2S]-[ferredoxin] + 2 S-adenosyl-L-methionine = 2-methyladenosine(37) in tRNA + 5'-deoxyadenosine + L-methionine + 2 oxidized [2Fe-2S]-[ferredoxin] + S-adenosyl-L-homocysteine. Its function is as follows. Specifically methylates position 2 of adenine 2503 in 23S rRNA and position 2 of adenine 37 in tRNAs. m2A2503 modification seems to play a crucial role in the proofreading step occurring at the peptidyl transferase center and thus would serve to optimize ribosomal fidelity. The chain is Dual-specificity RNA methyltransferase RlmN from Burkholderia ambifaria (strain MC40-6).